Consider the following 181-residue polypeptide: Oligoribonuclease (181 aa).

The Exonuclease domain maps to 8-171 (LIWLDLEMTG…DDIKDSIMEL (164 aa)). The active site involves Y129.

Belongs to the oligoribonuclease family.

The protein localises to the cytoplasm. In terms of biological role, 3'-to-5' exoribonuclease specific for small oligoribonucleotides. The chain is Oligoribonuclease from Pseudoalteromonas translucida (strain TAC 125).